We begin with the raw amino-acid sequence, 215 residues long: Cytochrome b6 (215 aa).

The chain crosses the membrane as a helical span at residues 32–52 (IFYCLGGITLTCFLVQVATGF). Cysteine 35 contributes to the heme c binding site. Residues histidine 86 and histidine 100 each contribute to the heme b site. 3 consecutive transmembrane segments (helical) span residues 90–110 (ASMMVLMMILHVFRVYLTGGF), 116–136 (LTWVTGVILAVLTVSFGVTGY), and 186–206 (LHTFVSPLLTAVFMLMHFLMI). 2 residues coordinate heme b: histidine 187 and histidine 202.

Belongs to the cytochrome b family. PetB subfamily. The 4 large subunits of the cytochrome b6-f complex are cytochrome b6, subunit IV (17 kDa polypeptide, PetD), cytochrome f and the Rieske protein, while the 4 small subunits are PetG, PetL, PetM and PetN. The complex functions as a dimer. Requires heme b as cofactor. It depends on heme c as a cofactor.

It is found in the plastid. Its subcellular location is the chloroplast thylakoid membrane. Functionally, component of the cytochrome b6-f complex, which mediates electron transfer between photosystem II (PSII) and photosystem I (PSI), cyclic electron flow around PSI, and state transitions. This chain is Cytochrome b6, found in Huperzia lucidula (Shining clubmoss).